Reading from the N-terminus, the 643-residue chain is uncharacterized protein (643 aa).

Over residues 179-199 (FKSSQLQQSPSPNKKSPSYSQ) the composition is skewed to low complexity. 2 disordered regions span residues 179–200 (FKSS…YSQV) and 349–377 (KRSN…STEN).

This is an uncharacterized protein from Caenorhabditis elegans.